Consider the following 390-residue polypeptide: MSVRVARVAWVRGLGASYRRGASSFPVPPPGAQGVAELLRDATGAEEEAPWAATERRMPGQCSVLLFPGQGSQVVGMGRGLLNYPRVRELYAAARRVLGYDLLELSLHGPQETLDRTVHCQPAIFVASLAAVEKLHHLQPSVIENCVAAAGFSVGEFAALVFAGAMEFAEGLYAVKIRAEAMQEASEAVPSGMLSVLGQPQSKFNFACLEAREHCKSLGIENPVCEVSNYLFPDCRVISGHQEALRFLQKNSSKFHFRRTRMLPVSGAFHTRLMEPAVEPLTQALKAVDIKKPLVSVYSNVHAHRYRHPGHIHKLLAQQLVSPVKWEQTMHAIYERKKGRGFPQTFEVGPGRQLGAILKSCNMQAWKSYSAVDVLQTLEHVDLDPQEPPR.

Residues 1-21 (MSVRVARVAWVRGLGASYRRG) constitute a mitochondrion transit peptide. Catalysis depends on residues S153 and H270. An N6-succinyllysine modification is found at K314.

This sequence belongs to the type II malonyltransferase family.

The protein resides in the mitochondrion. The catalysed reaction is holo-[ACP] + malonyl-CoA = malonyl-[ACP] + CoA. It functions in the pathway lipid metabolism; fatty acid biosynthesis. Catalyzes the transfer of a malonyl moiety from malonyl-CoA to the free thiol group of the phosphopantetheine arm of the mitochondrial ACP protein (NDUFAB1). This suggests the existence of the biosynthesis of fatty acids in mitochondria. Also acts as a mitochondrial small ribosomal subunit (mt-SSU) assembly factor. This Homo sapiens (Human) protein is Malonyl-CoA-acyl carrier protein transacylase, mitochondrial.